The following is a 336-amino-acid chain: Dihydroorotate dehydrogenase (quinone) (336 aa).

FMN contacts are provided by residues 62–66 (AGLDK) and T86. K66 provides a ligand contact to substrate. A substrate-binding site is contributed by 111–115 (NRMGF). FMN contacts are provided by N139 and N172. Position 172 (N172) interacts with substrate. The active-site Nucleophile is the S175. N177 lines the substrate pocket. FMN contacts are provided by K217 and T245. 246–247 (NT) is a binding site for substrate. FMN-binding positions include G268, G297, and 318 to 319 (YS).

This sequence belongs to the dihydroorotate dehydrogenase family. Type 2 subfamily. Monomer. FMN serves as cofactor.

The protein resides in the cell membrane. It carries out the reaction (S)-dihydroorotate + a quinone = orotate + a quinol. Its pathway is pyrimidine metabolism; UMP biosynthesis via de novo pathway; orotate from (S)-dihydroorotate (quinone route): step 1/1. Its function is as follows. Catalyzes the conversion of dihydroorotate to orotate with quinone as electron acceptor. This is Dihydroorotate dehydrogenase (quinone) from Psychromonas ingrahamii (strain DSM 17664 / CCUG 51855 / 37).